A 144-amino-acid chain; its full sequence is L-fucose mutarotase (144 aa).

His-22 (proton donor) is an active-site residue. Substrate-binding positions include Asp-30, Arg-109, and 131-133; that span reads YGN.

This sequence belongs to the RbsD / FucU family. FucU mutarotase subfamily. In terms of assembly, homodecamer.

It localises to the cytoplasm. It catalyses the reaction alpha-L-fucose = beta-L-fucose. Its pathway is carbohydrate metabolism; L-fucose metabolism. In terms of biological role, involved in the anomeric conversion of L-fucose. This is L-fucose mutarotase from Histophilus somni (strain 129Pt) (Haemophilus somnus).